The following is a 125-amino-acid chain: Large ribosomal subunit protein bL12 (125 aa).

Belongs to the bacterial ribosomal protein bL12 family. In terms of assembly, homodimer. Part of the ribosomal stalk of the 50S ribosomal subunit. Forms a multimeric L10(L12)X complex, where L10 forms an elongated spine to which 2 to 4 L12 dimers bind in a sequential fashion. Binds GTP-bound translation factors.

Functionally, forms part of the ribosomal stalk which helps the ribosome interact with GTP-bound translation factors. Is thus essential for accurate translation. This is Large ribosomal subunit protein bL12 from Porphyromonas gingivalis (strain ATCC 33277 / DSM 20709 / CIP 103683 / JCM 12257 / NCTC 11834 / 2561).